Here is a 177-residue protein sequence, read N- to C-terminus: Large ribosomal subunit protein uL6 (177 aa).

It belongs to the universal ribosomal protein uL6 family. Part of the 50S ribosomal subunit.

Functionally, this protein binds to the 23S rRNA, and is important in its secondary structure. It is located near the subunit interface in the base of the L7/L12 stalk, and near the tRNA binding site of the peptidyltransferase center. The polypeptide is Large ribosomal subunit protein uL6 (Rubrobacter xylanophilus (strain DSM 9941 / JCM 11954 / NBRC 16129 / PRD-1)).